The sequence spans 423 residues: Osteomodulin (423 aa).

The signal sequence occupies residues 1-20; sequence MGFLSPIYVLFFCFGVRVYC. Tyr-22, Tyr-25, Tyr-31, Tyr-39, Tyr-51, and Tyr-77 each carry sulfotyrosine. The region spanning 53-91 is the LRRNT domain; it reads VPFYNNILGCAKECFCPTNFPTSMYCDNRKLKTIPIIPM. LRR repeat units follow at residues 92-113, 116-129, 142-164, 165-184, 187-207, 213-233, 234-255, 258-279, 281-294, 301-322, and 331-353; these read HIQQ…SFIN, HLKE…KIKS, NLQQ…PKSL, ERLL…AMDG, NVTM…KEKT, KLMQ…GLPS, SLMY…YFDK, KLHA…IFNL, NLIE…KLKQ, NLEH…MICP, and HLTY…IFFC. N-linked (GlcNAc...) asparagine glycans are attached at residues Asn-113 and Asn-121. Residue Asn-187 is glycosylated (N-linked (GlcNAc...) asparagine). 2 N-linked (GlcNAc...) asparagine glycosylation sites follow: Asn-242 and Asn-278. Asn-316 is a glycosylation site (N-linked (GlcNAc...) asparagine). An intrachain disulfide couples Cys-321 to Cys-353. The tract at residues 381–406 is disordered; that stretch reads RSYQEEEEEDDHDSQDNTLEGQEVSD. Residues Tyr-413 and Tyr-414 each carry the sulfotyrosine modification.

This sequence belongs to the small leucine-rich proteoglycan (SLRP) family. SLRP class II subfamily. As to quaternary structure, binds the alpha(V)beta(3)-integrin. Post-translationally, glycosylated; contains keratan sulfate. As to expression, bone specific.

Its subcellular location is the secreted. The protein localises to the extracellular space. It localises to the extracellular matrix. May be implicated in biomineralization processes. Has a function in binding of osteoblasts via the alpha(V)beta(3)-integrin. The sequence is that of Osteomodulin (Omd) from Mus musculus (Mouse).